The following is a 292-amino-acid chain: Formamidopyrimidine-DNA glycosylase (292 aa).

P2 (schiff-base intermediate with DNA) is an active-site residue. E3 acts as the Proton donor in catalysis. Residue K61 is the Proton donor; for beta-elimination activity of the active site. Positions 103, 122, and 168 each coordinate DNA. The FPG-type zinc-finger motif lies at 254–288; sequence DAYGREGEHCRRCGAVMRREKFMNRSSFYCPRCQP. R278 serves as the catalytic Proton donor; for delta-elimination activity.

It belongs to the FPG family. In terms of assembly, monomer. It depends on Zn(2+) as a cofactor.

It carries out the reaction Hydrolysis of DNA containing ring-opened 7-methylguanine residues, releasing 2,6-diamino-4-hydroxy-5-(N-methyl)formamidopyrimidine.. The catalysed reaction is 2'-deoxyribonucleotide-(2'-deoxyribose 5'-phosphate)-2'-deoxyribonucleotide-DNA = a 3'-end 2'-deoxyribonucleotide-(2,3-dehydro-2,3-deoxyribose 5'-phosphate)-DNA + a 5'-end 5'-phospho-2'-deoxyribonucleoside-DNA + H(+). Functionally, involved in base excision repair of DNA damaged by oxidation or by mutagenic agents. Acts as a DNA glycosylase that recognizes and removes damaged bases. Has a preference for oxidized purines, such as 7,8-dihydro-8-oxoguanine (8-oxoG). Has AP (apurinic/apyrimidinic) lyase activity and introduces nicks in the DNA strand. Cleaves the DNA backbone by beta-delta elimination to generate a single-strand break at the site of the removed base with both 3'- and 5'-phosphates. In Mycobacterium ulcerans (strain Agy99), this protein is Formamidopyrimidine-DNA glycosylase.